The chain runs to 207 residues: LexA repressor (207 aa).

Positions 28-48 (RAEIARRLGFKSPNAAEEHLK) form a DNA-binding region, H-T-H motif. Catalysis depends on for autocatalytic cleavage activity residues serine 126 and lysine 163.

The protein belongs to the peptidase S24 family. Homodimer.

The enzyme catalyses Hydrolysis of Ala-|-Gly bond in repressor LexA.. Represses a number of genes involved in the response to DNA damage (SOS response), including recA and lexA. In the presence of single-stranded DNA, RecA interacts with LexA causing an autocatalytic cleavage which disrupts the DNA-binding part of LexA, leading to derepression of the SOS regulon and eventually DNA repair. The chain is LexA repressor from Marinomonas sp. (strain MWYL1).